Here is a 145-residue protein sequence, read N- to C-terminus: Small t antigen (145 aa).

Residues 6 to 82 (RLTELLCLPV…PEESGYATFE (77 aa)) form the J domain. The tract at residues 58 to 80 (EGLRADETLEDSDPEPEESGYAT) is disordered. Residues 65–75 (TLEDSDPEPEE) show a composition bias toward acidic residues.

As to quaternary structure, interacts with host PPP2R1A; the interaction inhibits PP2A activity.

Its subcellular location is the host cytoplasm. It localises to the host nucleus. In terms of biological role, promotes efficient viral genome replication by accelerating both G1 and S phase progression of the cell cycle. The sequence is that of Small t antigen from Budgerigar fledgling disease virus (BFPyV).